Reading from the N-terminus, the 586-residue chain is 2-succinyl-5-enolpyruvyl-6-hydroxy-3-cyclohexene-1-carboxylate synthase (586 aa).

The protein belongs to the TPP enzyme family. MenD subfamily. As to quaternary structure, homodimer. The cofactor is Mg(2+). Mn(2+) is required as a cofactor. Requires thiamine diphosphate as cofactor.

The enzyme catalyses isochorismate + 2-oxoglutarate + H(+) = 5-enolpyruvoyl-6-hydroxy-2-succinyl-cyclohex-3-ene-1-carboxylate + CO2. The protein operates within quinol/quinone metabolism; 1,4-dihydroxy-2-naphthoate biosynthesis; 1,4-dihydroxy-2-naphthoate from chorismate: step 2/7. Its pathway is quinol/quinone metabolism; menaquinone biosynthesis. Functionally, catalyzes the thiamine diphosphate-dependent decarboxylation of 2-oxoglutarate and the subsequent addition of the resulting succinic semialdehyde-thiamine pyrophosphate anion to isochorismate to yield 2-succinyl-5-enolpyruvyl-6-hydroxy-3-cyclohexene-1-carboxylate (SEPHCHC). In Natronomonas pharaonis (strain ATCC 35678 / DSM 2160 / CIP 103997 / JCM 8858 / NBRC 14720 / NCIMB 2260 / Gabara) (Halobacterium pharaonis), this protein is 2-succinyl-5-enolpyruvyl-6-hydroxy-3-cyclohexene-1-carboxylate synthase.